The primary structure comprises 133 residues: Large-conductance mechanosensitive channel (133 aa).

The next 2 helical transmembrane spans lie at 10–30 (FAVK…AAFG) and 76–96 (GIFV…FLVV).

The protein belongs to the MscL family. As to quaternary structure, homopentamer.

It localises to the cell inner membrane. In terms of biological role, channel that opens in response to stretch forces in the membrane lipid bilayer. May participate in the regulation of osmotic pressure changes within the cell. This is Large-conductance mechanosensitive channel from Chlorobium phaeobacteroides (strain BS1).